A 1349-amino-acid chain; its full sequence is Indole-3-acetaldehyde oxidase (1349 aa).

Positions 7 to 94 (AAVVLAVNGK…RCSVTTSEGI (88 aa)) constitute a 2Fe-2S ferredoxin-type domain. [2Fe-2S] cluster contacts are provided by cysteine 46, cysteine 51, and cysteine 54. Positions 237 to 415 (VPVSDDGWYR…LSIFIPEWGS (179 aa)) constitute an FAD-binding PCMH-type domain.

This sequence belongs to the xanthine dehydrogenase family. In terms of assembly, aldehyde oxidases (AO) are homodimers and heterodimers of AO subunits. Requires [2Fe-2S] cluster as cofactor. FAD serves as cofactor. Mo-molybdopterin is required as a cofactor. As to expression, mostly expressed in coleoptiles, and, to a lower extent, in mesocotyl and roots.

It is found in the cytoplasm. The enzyme catalyses indole-3-acetaldehyde + O2 + H2O = (indol-3-yl)acetate + H2O2 + H(+). In higher plants aldehyde oxidases (AO) appear to be homo- and heterodimeric assemblies of AO subunits with probably different physiological functions. Involved in the biosynthesis of auxin. The chain is Indole-3-acetaldehyde oxidase (AO2) from Zea mays (Maize).